Consider the following 365-residue polypeptide: MEVQLTNRQQHILWATVRHYIATAEPVGSKALVDEYDLGVSSATIRNVMGVLEKSGLLYQPHTSAGRIPSDSGYRIYVDQLITPGLRDAARTDVLAKEVELALQNRLHWEDWSLEAVLQGAAQILATVSGCISLITMPQTTTAILRHLQLMQIEANKIMLIVVTDDYETHSKLMNLSPTEEEAKLDADGIDHELKIVSNFLNTHLRGRSLLELATLDWSDLDQEFQRYGEFLKGSVTELTRRHLTPTTTQIMVRGVAEVLRQPEFSQLQQVQTIIQLLEEEQDQLWRLIFAEPETEEAGKSKVTVRIGTENPLEPIRTCTLITSTYRRGLLPVGSVGVLGPTRLDYDSAIAVVAAAADYLSDAFS.

Belongs to the HrcA family.

Functionally, negative regulator of class I heat shock genes (grpE-dnaK-dnaJ and groELS operons). Prevents heat-shock induction of these operons. The chain is Heat-inducible transcription repressor HrcA from Nodularia spumigena.